We begin with the raw amino-acid sequence, 43 residues long: Probable intron-encoded DNA endonuclease 2 (43 aa).

The protein belongs to the LAGLIDADG endonuclease family.

The protein resides in the mitochondrion. Mitochondrial DNA endonuclease involved in intron homing. This chain is Probable intron-encoded DNA endonuclease 2 (hegI2), found in Mycosarcoma maydis (Corn smut fungus).